Reading from the N-terminus, the 263-residue chain is Leukocyte-associated immunoglobulin-like receptor 1 (263 aa).

Residues 1–21 (MPLHSVIVLVLVLCLGWKSNT) form the signal peptide. An Ig-like C2-type domain is found at 27–112 (SDFTICAEPG…VWSQRSNDLQ (86 aa)). Residues Cys49 and Cys96 are joined by a disulfide bond. An N-linked (GlcNAc...) asparagine glycan is attached at Asn87. A helical transmembrane segment spans residues 144–164 (ILTVVSVIFLLCLSLFLFCFL). 2 consecutive short sequence motifs (ITIM motif) follow at residues 225–230 (VTYAQL) and 255–260 (STYAAI). Residues Tyr227 and Tyr257 each carry the phosphotyrosine modification.

As to quaternary structure, interacts with SH2 domains of tyrosine-protein phosphatases PTPN6 and PTPN11. The interaction with PTPN6 is constitutive. Interacts with the SH2 domain of CSK. Binds with high affinity to extracellular matrix collagens, the interaction is functionally important. In terms of processing, phosphorylation at Tyr-227 and Tyr-257 activates it. May be phosphorylated by LCK. N-glycosylated. In terms of tissue distribution, expressed in lymphoid and non-lymphoid organs.

The protein resides in the membrane. In terms of biological role, functions as an inhibitory receptor that plays a constitutive negative regulatory role on cytolytic function of natural killer (NK) cells, B-cells and T-cells. Activation by Tyr phosphorylation results in recruitment and activation of the phosphatases PTPN6 and PTPN11. It also reduces the increase of intracellular calcium evoked by B-cell receptor ligation. May also play its inhibitory role independently of SH2-containing phosphatases. Modulates cytokine production in CD4+ T-cells, down-regulating IL2 and IFNG production while inducing secretion of transforming growth factor beta. Also down-regulates IgG and IgE production in B-cells as well as IL8, IL10 and TNF secretion. Inhibits proliferation and induces apoptosis in myeloid leukemia cell lines as well as prevents nuclear translocation of NF-kappa-B p65 subunit/RELA and phosphorylation of I-kappa-B alpha/CHUK in these cells. Inhibits the differentiation of peripheral blood precursors towards dendritic cells. This is Leukocyte-associated immunoglobulin-like receptor 1 (Lair1) from Rattus norvegicus (Rat).